The primary structure comprises 916 residues: MFAPLLKKLFGSKNERDVKRMAKAVQAINALEPQMVALSDEQLKAKTAEFQQRYAKGETLDQLLPEAFAVVREAGKRVMGMRHFDVQLIGGMTLHDGKIAEMRTGEGKTLVGTLPVYLNALSGKGVHVVTVNDYLARRDANWMRPLYEFLGLSVGVVTPFQPPEDKRAAYAADITYGTNNEFGFDYLRDNMAFSLDDKFQRELNFAVVDEVDSILIDEARTPLIISGQAEDSSELYIKINKLIPRLNRQVEEVEGKPTEEGHYSIDEKTRQVELNEQGHQFIEDLLSQNGLLGEGESLYSAHNLSLLTHVYAALRAHTLFHRNVEYIVQGDQILLIDEHTGRTMPGRRLSEGLHQAIEAKEGLPIQAESQTLASTTFQNYFRLYNKLAGMTGTADTEAFEFRQIYGLDVVVIPTHRPIARKDFNDLVYLTQEEKYAAIITDIKQCQALGRPILVGTASIESSEYVSKLLQEAGIEHKVLNAKYHEKEAEIIAQAGAPGSVTIATNMAGRGTDILLGGNWEVEVAALENPTEEQIAQIKAEWQKRHQQVIEAGGLHVIASERHESRRIDNQLRGRAGRQGDPGSSRFYLSLEDNLMRIFASDRVKNFMKALGMQSGEAIEHRMVTNAIEKAQRKVEGRNFDIRKQLLEFDDVANEQRKVIYHMRNTLLSAEDVGETIKEFREETLSATINQHIPPQSLPEQWDIEGLEAALYSDFAVRLPIQQWLDEDDKLYEETLRSKILEQIVAAYYEKEELAGAEALRAFEKQMLLRVLDDLWKDHLSTMDHLRHGIHLRGYAQKNPKQEYKRESFTLFQELLDSIKRDTIRVLSHVQVRREDPAEEEARLRREAEELAKRMQFQHAEAPSMEQAVAGEEEELPEGPAPVVPLEPVRNEQKIGRNEPCPCGSGKKYKHCHGQLD.

Residues Gln-87, 105–109 (GEGKT), and Asp-512 each bind ATP. Positions 857 to 916 (QHAEAPSMEQAVAGEEEELPEGPAPVVPLEPVRNEQKIGRNEPCPCGSGKKYKHCHGQLD) are disordered. Positions 900, 902, 911, and 912 each coordinate Zn(2+). A compositionally biased stretch (basic residues) spans 906–916 (KKYKHCHGQLD).

Belongs to the SecA family. Monomer and homodimer. Part of the essential Sec protein translocation apparatus which comprises SecA, SecYEG and auxiliary proteins SecDF-YajC and YidC. Zn(2+) is required as a cofactor.

It localises to the cell inner membrane. Its subcellular location is the cytoplasm. The enzyme catalyses ATP + H2O + cellular proteinSide 1 = ADP + phosphate + cellular proteinSide 2.. In terms of biological role, part of the Sec protein translocase complex. Interacts with the SecYEG preprotein conducting channel. Has a central role in coupling the hydrolysis of ATP to the transfer of proteins into and across the cell membrane, serving both as a receptor for the preprotein-SecB complex and as an ATP-driven molecular motor driving the stepwise translocation of polypeptide chains across the membrane. This chain is Protein translocase subunit SecA, found in Pseudomonas aeruginosa (strain UCBPP-PA14).